Here is a 621-residue protein sequence, read N- to C-terminus: MBT domain-containing protein 1 (621 aa).

The span at 1 to 21 shows a compositional bias: basic and acidic residues; the sequence is MEKTKDPADRSSRSERKRRDS. The tract at residues 1–55 is disordered; that stretch reads MEKTKDPADRSSRSERKRRDSFGMFDGYDSCSEDTSSSSSSDESEEEVAPLPSSL. Low complexity predominate over residues 29 to 41; it reads DSCSEDTSSSSSS. The FCS-type zinc-finger motif lies at 68 to 103; that stretch reads PDGKSGMATCEMCGMVGVRDAFYSKTKRFCSVSCSR. 4 residues coordinate Zn(2+): Cys77, Cys80, Cys97, and Cys101. 4 MBT repeats span residues 164–268, 276–373, 374–479, and 487–583; these read FSWG…LVPP, TNWK…IGHR, FKRT…LTPP, and FKWF…LQPP. Residues 581 to 621 form a disordered region; it reads QPPAPQSNKDGQSNVSKQKKKSKSQPYKGHKKNFRKPGNRP. Residues 597 to 621 show a composition bias toward basic residues; that stretch reads KQKKKSKSQPYKGHKKNFRKPGNRP.

As to quaternary structure, monomer. Component of the NuA4 histone acetyltransferase complex.

The protein localises to the nucleus. The protein resides in the chromosome. Its function is as follows. Chromatin reader component of the NuA4 histone acetyltransferase complex, a multiprotein complex involved in transcriptional activation of select genes principally by acetylation of nucleosomal histones H4 and H2A. The NuA4 complex plays a direct role in repair of DNA double-strand breaks (DSBs) by promoting homologous recombination (HR). MBTD1 specifically recognizes and binds monomethylated and dimethylated 'Lys-20' on histone H4 (H4K20me1 and H4K20me2, respectively). In the NuA4 complex, MBTD1 promotes recruitment of the complex to H4K20me marks by competing with TP53BP1 for binding to H4K20me. Following recruitment to H4K20me at DNA breaks, the NuA4 complex catalyzes acetylation of 'Lys-15' on histone H2A (H2AK15), blocking the ubiquitination mark required for TP53BP1 localization at DNA breaks, thereby promoting homologous recombination (HR). This is MBT domain-containing protein 1 from Xenopus laevis (African clawed frog).